The primary structure comprises 51 residues: Large ribosomal subunit protein bL33 (51 aa).

Positions 1-23 (MREKIKLESSAGTGHFYTTTKNK) are disordered. Polar residues predominate over residues 10 to 20 (SAGTGHFYTTT).

The protein belongs to the bacterial ribosomal protein bL33 family.

This is Large ribosomal subunit protein bL33 from Methylobacillus flagellatus (strain ATCC 51484 / DSM 6875 / VKM B-1610 / KT).